The primary structure comprises 318 residues: Large ribosomal subunit protein uL10 (318 aa).

At Tyr24 the chain carries Phosphotyrosine. Thr59 carries the phosphothreonine modification. A Glycyl lysine isopeptide (Lys-Gly) (interchain with G-Cter in ubiquitin) cross-link involves residue Lys264. A Glycyl lysine isopeptide (Lys-Gly) (interchain with G-Cter in SUMO1); alternate cross-link involves residue Lys298. Residue Lys298 forms a Glycyl lysine isopeptide (Lys-Gly) (interchain with G-Cter in SUMO2); alternate linkage. A disordered region spans residues 298-318 (KVEAKEESEESDEDMGFGLFD). Over residues 303–312 (EESEESDEDM) the composition is skewed to acidic residues. Phosphoserine is present on residues Ser305 and Ser308.

It belongs to the universal ribosomal protein uL10 family. P0 forms a pentameric complex by interaction with dimers of P1 and P2. Identified in a IGF2BP1-dependent mRNP granule complex containing untranslated mRNAs. Interacts with APEX1. Interacts with FMR1 isoform 6. Post-translationally, ubiquitinated at Lys-264 by RNF14 and RNF25 in response to ribosome collisions (ribosome stalling).

It is found in the nucleus. It localises to the cytoplasm. In terms of biological role, ribosomal protein P0 is the functional equivalent of E.coli protein L10. The sequence is that of Large ribosomal subunit protein uL10 (RPLP0) from Oryctolagus cuniculus (Rabbit).